The primary structure comprises 159 residues: Transcriptional repressor NrdR (159 aa).

Residues 1-11 (MQCPSCQNTDS) are compositionally biased toward polar residues. The interval 1–20 (MQCPSCQNTDSRVLESRSAD) is disordered. The segment at 3–34 (CPSCQNTDSRVLESRSADSGRSVRRRRECLNC) is a zinc-finger region. In terms of domain architecture, ATP-cone spans 49 to 139 (INVLKRSGAK…VYRQFNGIND (91 aa)).

This sequence belongs to the NrdR family. The cofactor is Zn(2+).

Its function is as follows. Negatively regulates transcription of bacterial ribonucleotide reductase nrd genes and operons by binding to NrdR-boxes. The chain is Transcriptional repressor NrdR from Prochlorococcus marinus (strain NATL1A).